The sequence spans 258 residues: Imidazole glycerol phosphate synthase subunit HisF (258 aa).

Residues D11 and D130 contribute to the active site.

Belongs to the HisA/HisF family. In terms of assembly, heterodimer of HisH and HisF.

The protein resides in the cytoplasm. The enzyme catalyses 5-[(5-phospho-1-deoxy-D-ribulos-1-ylimino)methylamino]-1-(5-phospho-beta-D-ribosyl)imidazole-4-carboxamide + L-glutamine = D-erythro-1-(imidazol-4-yl)glycerol 3-phosphate + 5-amino-1-(5-phospho-beta-D-ribosyl)imidazole-4-carboxamide + L-glutamate + H(+). The protein operates within amino-acid biosynthesis; L-histidine biosynthesis; L-histidine from 5-phospho-alpha-D-ribose 1-diphosphate: step 5/9. Its function is as follows. IGPS catalyzes the conversion of PRFAR and glutamine to IGP, AICAR and glutamate. The HisF subunit catalyzes the cyclization activity that produces IGP and AICAR from PRFAR using the ammonia provided by the HisH subunit. The chain is Imidazole glycerol phosphate synthase subunit HisF from Xanthomonas euvesicatoria pv. vesicatoria (strain 85-10) (Xanthomonas campestris pv. vesicatoria).